A 157-amino-acid chain; its full sequence is Small ribosomal subunit protein uS7cz/uS7cy (157 aa).

This sequence belongs to the universal ribosomal protein uS7 family. Part of the 30S ribosomal subunit.

Its subcellular location is the plastid. The protein resides in the chloroplast. Its function is as follows. One of the primary rRNA binding proteins, it binds directly to 16S rRNA where it nucleates assembly of the head domain of the 30S subunit. In Welwitschia mirabilis (Tree tumbo), this protein is Small ribosomal subunit protein uS7cz/uS7cy (rps7-A).